Reading from the N-terminus, the 285-residue chain is Nucleotide-binding protein GSU1884 (285 aa).

Residue 8 to 15 coordinates ATP; it reads GLSGSGKS. 59-62 contacts GTP; it reads DIRG.

This sequence belongs to the RapZ-like family.

In terms of biological role, displays ATPase and GTPase activities. In Geobacter sulfurreducens (strain ATCC 51573 / DSM 12127 / PCA), this protein is Nucleotide-binding protein GSU1884.